The following is a 484-amino-acid chain: Glutamate--tRNA ligase (484 aa).

The short motif at 11–21 (PSPTGYPHLGN) is the 'HIGH' region element. 4 residues coordinate Zn(2+): Cys108, Cys110, Cys135, and Asp137. A 'KMSKS' region motif is present at residues 245 to 249 (KLSKR). Lys248 is a binding site for ATP.

This sequence belongs to the class-I aminoacyl-tRNA synthetase family. Glutamate--tRNA ligase type 1 subfamily. In terms of assembly, monomer. The cofactor is Zn(2+).

It is found in the cytoplasm. It catalyses the reaction tRNA(Glu) + L-glutamate + ATP = L-glutamyl-tRNA(Glu) + AMP + diphosphate. Catalyzes the attachment of glutamate to tRNA(Glu) in a two-step reaction: glutamate is first activated by ATP to form Glu-AMP and then transferred to the acceptor end of tRNA(Glu). The sequence is that of Glutamate--tRNA ligase from Dehalococcoides mccartyi (strain ATCC BAA-2266 / KCTC 15142 / 195) (Dehalococcoides ethenogenes (strain 195)).